A 763-amino-acid polypeptide reads, in one-letter code: Phosphoglycerol transferase I (763 aa).

The next 4 membrane-spanning stretches (helical) occupy residues 1–21, 26–46, 77–97, and 108–128; these read MSEL…AWKA, WWFA…ITLY, ILPG…LGWI, and VGYS…SPAF.

Belongs to the OpgB family.

It localises to the cell inner membrane. The enzyme catalyses a phosphatidylglycerol + a membrane-derived-oligosaccharide D-glucose = a 1,2-diacyl-sn-glycerol + a membrane-derived-oligosaccharide 6-(glycerophospho)-D-glucose.. It participates in glycan metabolism; osmoregulated periplasmic glucan (OPG) biosynthesis. Its function is as follows. Transfers a phosphoglycerol residue from phosphatidylglycerol to the membrane-bound nascent glucan backbones. This is Phosphoglycerol transferase I from Salmonella agona (strain SL483).